The chain runs to 396 residues: MRGGQRRASRLRPPTYRRRPPPAASILEVAPVQTQTLTQTDTAAGGAEPDAERGVLLAMPAQPGAGAALPHPGAPVDVPEHPEPPPPTRTESGGPSSDLFRQYLREIGRIPLLSAAEEVDLARRVEAGLFAEEKLRCSPGLDDRLALDLDRLVVLGRLAKRRLIEANLRLVVSVAKRYVGRGLTMLDLVQEGNLGLIRAVEKFDYARGYKFSTYATWWIRQAMSRALADQARTIRVPVHVVELINRVVRVQRRMLQERGCEPTPQEVAAHLDLAPERVGEVLRLAQEPVSLHAPVGEEDDVALGDLIEDGDAASPVESAAFLLLRQHLEAVLSTLGERERKVVQLRYGLADGRPRTLEEIGRLFGVTRERIRQIESKTLSKLRDHAYADQLRGYLD.

A compositionally biased stretch (basic residues) spans 1-20 (MRGGQRRASRLRPPTYRRRP). Positions 1-96 (MRGGQRRASR…PTRTESGGPS (96 aa)) are disordered. 2 stretches are compositionally biased toward low complexity: residues 33-42 (QTQTLTQTDT) and 56-75 (LLAMPAQPGAGAALPHPGAP). A Polymerase core binding motif is present at residues 187–200 (DLVQEGNLGLIRAV). Positions 357-376 (LEEIGRLFGVTRERIRQIES) form a DNA-binding region, H-T-H motif.

This sequence belongs to the sigma-70 factor family. Interacts transiently with the RNA polymerase catalytic core. Interacts with RNA polymerase-binding protein RbpA.

In terms of biological role, sigma factors are initiation factors that promote the attachment of RNA polymerase to specific initiation sites and are then released. This is RNA polymerase principal sigma factor HrdA (hrdA) from Streptomyces coelicolor (strain ATCC BAA-471 / A3(2) / M145).